A 141-amino-acid polypeptide reads, in one-letter code: Nucleoside diphosphate kinase (141 aa).

ATP is bound by residues Lys-11, Phe-59, Arg-87, Thr-93, Arg-104, and Asn-114. The Pros-phosphohistidine intermediate role is filled by His-117.

It belongs to the NDK family. As to quaternary structure, homotetramer. The cofactor is Mg(2+).

Its subcellular location is the cytoplasm. The catalysed reaction is a 2'-deoxyribonucleoside 5'-diphosphate + ATP = a 2'-deoxyribonucleoside 5'-triphosphate + ADP. The enzyme catalyses a ribonucleoside 5'-diphosphate + ATP = a ribonucleoside 5'-triphosphate + ADP. Functionally, major role in the synthesis of nucleoside triphosphates other than ATP. The ATP gamma phosphate is transferred to the NDP beta phosphate via a ping-pong mechanism, using a phosphorylated active-site intermediate. The sequence is that of Nucleoside diphosphate kinase from Nitrosomonas eutropha (strain DSM 101675 / C91 / Nm57).